Here is a 310-residue protein sequence, read N- to C-terminus: L-lactate dehydrogenase (310 aa).

Residues Val-11, Asp-32, Tyr-62, and 76-77 (GV) contribute to the NAD(+) site. Substrate-binding positions include Gln-79, Arg-85, and 117–120 (NPVD). Residues 115 to 117 (ASN) and Ser-140 contribute to the NAD(+) site. 145 to 148 (DTAR) contacts substrate. Positions 150 and 165 each coordinate beta-D-fructose 1,6-bisphosphate. The Proton acceptor role is filled by His-172. Thr-227 is a binding site for substrate.

The protein belongs to the LDH/MDH superfamily. LDH family. In terms of assembly, homotetramer.

The protein resides in the cytoplasm. The catalysed reaction is (S)-lactate + NAD(+) = pyruvate + NADH + H(+). Its pathway is fermentation; pyruvate fermentation to lactate; (S)-lactate from pyruvate: step 1/1. Allosterically activated by fructose 1,6-bisphosphate (FBP). In terms of biological role, catalyzes the conversion of lactate to pyruvate. The sequence is that of L-lactate dehydrogenase from Allorhizobium ampelinum (strain ATCC BAA-846 / DSM 112012 / S4) (Agrobacterium vitis (strain S4)).